An 845-amino-acid polypeptide reads, in one-letter code: Protein P (845 aa).

The tract at residues 1–179 is terminal protein domain (TP); sequence MPLSYQHFLK…FCGSPYSWEQ (179 aa). The segment at 180–348 is spacer; it reads ELHHGRLVTK…YCLSHLVNLL (169 aa). 2 disordered regions span residues 188 to 211 and 288 to 317; these read TKTSQRHGDKSVCSQPSGILSRSS and YSHLSTSKRQSSSGHKVEFPSFPPSSARSQ. 2 stretches are compositionally biased toward polar residues: residues 199-211 and 290-301; these read VCSQPSGILSRSS and HLSTSKRQSSSG. Residues 349–692 are polymerase/reverse transcriptase domain (RT); that stretch reads EDWGPCTDHG…YMNLYPVARQ (344 aa). A Reverse transcriptase domain is found at 359–602; sequence EHHIRIPRTP…YSLNFMGYII (244 aa). Mg(2+) is bound by residues D431, D553, and D554.

Belongs to the hepadnaviridae P protein family.

It catalyses the reaction DNA(n) + a 2'-deoxyribonucleoside 5'-triphosphate = DNA(n+1) + diphosphate. The catalysed reaction is Endonucleolytic cleavage to 5'-phosphomonoester.. Activated by host HSP70 and HSP40 in vitro to be able to bind the epsilon loop of the pgRNA. Because deletion of the RNase H region renders the protein partly chaperone-independent, the chaperones may be needed indirectly to relieve occlusion of the RNA-binding site by this domain. Inhibited by several reverse-transcriptase inhibitors: Lamivudine, Adefovir and Entecavir. Functionally, multifunctional enzyme that converts the viral RNA genome into dsDNA in viral cytoplasmic capsids. This enzyme displays a DNA polymerase activity that can copy either DNA or RNA templates, and a ribonuclease H (RNase H) activity that cleaves the RNA strand of RNA-DNA heteroduplexes in a partially processive 3'- to 5'-endonucleasic mode. Neo-synthesized pregenomic RNA (pgRNA) are encapsidated together with the P protein, and reverse-transcribed inside the nucleocapsid. Initiation of reverse-transcription occurs first by binding the epsilon loop on the pgRNA genome, and is initiated by protein priming, thereby the 5'-end of (-)DNA is covalently linked to P protein. Partial (+)DNA is synthesized from the (-)DNA template and generates the relaxed circular DNA (RC-DNA) genome. After budding and infection, the RC-DNA migrates in the nucleus, and is converted into a plasmid-like covalently closed circular DNA (cccDNA). The activity of P protein does not seem to be necessary for cccDNA generation, and is presumably released from (+)DNA by host nuclear DNA repair machinery. This Homo sapiens (Human) protein is Protein P.